The following is a 397-amino-acid chain: Argininosuccinate synthase (397 aa).

8–16 (AYSGGLDTS) lines the ATP pocket. An L-citrulline-binding site is contributed by Tyr-87. Gly-117 is a binding site for ATP. L-aspartate-binding residues include Thr-119, Asn-123, and Asp-124. Residue Asn-123 coordinates L-citrulline. Residues Arg-127, Ser-175, Glu-259, and Tyr-271 each contribute to the L-citrulline site.

It belongs to the argininosuccinate synthase family. Type 1 subfamily. As to quaternary structure, homotetramer.

It localises to the cytoplasm. It carries out the reaction L-citrulline + L-aspartate + ATP = 2-(N(omega)-L-arginino)succinate + AMP + diphosphate + H(+). It participates in amino-acid biosynthesis; L-arginine biosynthesis; L-arginine from L-ornithine and carbamoyl phosphate: step 2/3. The protein is Argininosuccinate synthase of Streptomyces griseus subsp. griseus (strain JCM 4626 / CBS 651.72 / NBRC 13350 / KCC S-0626 / ISP 5235).